Here is a 394-residue protein sequence, read N- to C-terminus: Deoxyguanosinetriphosphate triphosphohydrolase-like protein (394 aa).

The segment at 1–34 (MSSSPFFVPRAPYAEDPAKSRGRRFPEDESRTRT) is disordered. Over residues 16-34 (DPAKSRGRRFPEDESRTRT) the composition is skewed to basic and acidic residues. In terms of domain architecture, HD spans 70–210 (RLTHSLEVAQ…AALADDIAYN (141 aa)).

The protein belongs to the dGTPase family. Type 2 subfamily.

This is Deoxyguanosinetriphosphate triphosphohydrolase-like protein from Caulobacter sp. (strain K31).